The primary structure comprises 378 residues: Ribosomal RNA large subunit methyltransferase G (378 aa).

It belongs to the methyltransferase superfamily. RlmG family.

The protein localises to the cytoplasm. The catalysed reaction is guanosine(1835) in 23S rRNA + S-adenosyl-L-methionine = N(2)-methylguanosine(1835) in 23S rRNA + S-adenosyl-L-homocysteine + H(+). Specifically methylates the guanine in position 1835 (m2G1835) of 23S rRNA. The protein is Ribosomal RNA large subunit methyltransferase G of Shigella flexneri serotype 5b (strain 8401).